A 473-amino-acid polypeptide reads, in one-letter code: 3-isopropylmalate dehydratase large subunit (473 aa).

The tract at residues 289 to 319 (TVTWGTTPGQTAGITEPIPDPDDLPEEDRDT) is disordered. A compositionally biased stretch (polar residues) spans 291–301 (TWGTTPGQTAG). Residues 307–317 (PDPDDLPEEDR) show a composition bias toward acidic residues. The [4Fe-4S] cluster site is built by cysteine 348, cysteine 408, and cysteine 411.

Belongs to the aconitase/IPM isomerase family. LeuC type 1 subfamily. As to quaternary structure, heterodimer of LeuC and LeuD. [4Fe-4S] cluster serves as cofactor.

The enzyme catalyses (2R,3S)-3-isopropylmalate = (2S)-2-isopropylmalate. Its pathway is amino-acid biosynthesis; L-leucine biosynthesis; L-leucine from 3-methyl-2-oxobutanoate: step 2/4. Its function is as follows. Catalyzes the isomerization between 2-isopropylmalate and 3-isopropylmalate, via the formation of 2-isopropylmaleate. The protein is 3-isopropylmalate dehydratase large subunit of Halorubrum lacusprofundi (strain ATCC 49239 / DSM 5036 / JCM 8891 / ACAM 34).